The following is a 62-amino-acid chain: Photosystem II reaction center protein Z (62 aa).

2 helical membrane-spanning segments follow: residues Ser8–Ala28 and Phe41–Ile61.

This sequence belongs to the PsbZ family. As to quaternary structure, PSII is composed of 1 copy each of membrane proteins PsbA, PsbB, PsbC, PsbD, PsbE, PsbF, PsbH, PsbI, PsbJ, PsbK, PsbL, PsbM, PsbT, PsbY, PsbZ, Psb30/Ycf12, at least 3 peripheral proteins of the oxygen-evolving complex and a large number of cofactors. It forms dimeric complexes.

The protein resides in the plastid. Its subcellular location is the chloroplast thylakoid membrane. In terms of biological role, may control the interaction of photosystem II (PSII) cores with the light-harvesting antenna, regulates electron flow through the 2 photosystem reaction centers. PSII is a light-driven water plastoquinone oxidoreductase, using light energy to abstract electrons from H(2)O, generating a proton gradient subsequently used for ATP formation. This is Photosystem II reaction center protein Z from Chaetosphaeridium globosum (Charophycean green alga).